We begin with the raw amino-acid sequence, 247 residues long: Ribonuclease 3 (247 aa).

Residues 21 to 149 form the RNase III domain; that stretch reads VDHQPLLDHL…LFGAIFRQHG (129 aa). Mg(2+) is bound at residue E62. D66 is a catalytic residue. D135 and E138 together coordinate Mg(2+). E138 is a catalytic residue. Positions 176-244 constitute a DRBM domain; the sequence is DWKTTLQEEL…AHQAFRKLRE (69 aa).

The protein belongs to the ribonuclease III family. As to quaternary structure, homodimer. Mg(2+) serves as cofactor.

The protein localises to the cytoplasm. It catalyses the reaction Endonucleolytic cleavage to 5'-phosphomonoester.. Functionally, digests double-stranded RNA. Involved in the processing of primary rRNA transcript to yield the immediate precursors to the large and small rRNAs (23S and 16S). Processes some mRNAs, and tRNAs when they are encoded in the rRNA operon. Processes pre-crRNA and tracrRNA of type II CRISPR loci if present in the organism. The polypeptide is Ribonuclease 3 (Corynebacterium glutamicum (strain ATCC 13032 / DSM 20300 / JCM 1318 / BCRC 11384 / CCUG 27702 / LMG 3730 / NBRC 12168 / NCIMB 10025 / NRRL B-2784 / 534)).